The sequence spans 198 residues: RNA pyrophosphohydrolase (198 aa).

The region spanning 6 to 149 is the Nudix hydrolase domain; it reads GYRPNVGIVI…KKEVYRKAMK (144 aa). The Nudix box signature appears at 38-59; sequence GGINDNESAEQAMYRELFEEVG.

This sequence belongs to the Nudix hydrolase family. RppH subfamily. It depends on a divalent metal cation as a cofactor.

Functionally, accelerates the degradation of transcripts by removing pyrophosphate from the 5'-end of triphosphorylated RNA, leading to a more labile monophosphorylated state that can stimulate subsequent ribonuclease cleavage. This is RNA pyrophosphohydrolase from Pasteurella multocida (strain Pm70).